The chain runs to 349 residues: Methylthioribose-1-phosphate isomerase (349 aa).

Substrate-binding positions include 51 to 53 (RGA), R94, and Q199. Residue D240 is the Proton donor of the active site. Residue 250–251 (NK) participates in substrate binding.

It belongs to the eIF-2B alpha/beta/delta subunits family. MtnA subfamily. Homodimer.

The enzyme catalyses 5-(methylsulfanyl)-alpha-D-ribose 1-phosphate = 5-(methylsulfanyl)-D-ribulose 1-phosphate. The protein operates within amino-acid biosynthesis; L-methionine biosynthesis via salvage pathway; L-methionine from S-methyl-5-thio-alpha-D-ribose 1-phosphate: step 1/6. In terms of biological role, catalyzes the interconversion of methylthioribose-1-phosphate (MTR-1-P) into methylthioribulose-1-phosphate (MTRu-1-P). The protein is Methylthioribose-1-phosphate isomerase of Bacillus cytotoxicus (strain DSM 22905 / CIP 110041 / 391-98 / NVH 391-98).